A 642-amino-acid polypeptide reads, in one-letter code: Threonine--tRNA ligase (642 aa).

The region spanning 1–61 is the TGS domain; it reads MPIITLPDGS…EQDSQLAIIT (61 aa). The interval 243 to 534 is catalytic; it reads DHRKIGKQLD…LTEEYAGFFP (292 aa). 3 residues coordinate Zn(2+): C334, H385, and H511.

Belongs to the class-II aminoacyl-tRNA synthetase family. In terms of assembly, homodimer. Zn(2+) serves as cofactor.

It localises to the cytoplasm. The enzyme catalyses tRNA(Thr) + L-threonine + ATP = L-threonyl-tRNA(Thr) + AMP + diphosphate + H(+). Functionally, catalyzes the attachment of threonine to tRNA(Thr) in a two-step reaction: L-threonine is first activated by ATP to form Thr-AMP and then transferred to the acceptor end of tRNA(Thr). Also edits incorrectly charged L-seryl-tRNA(Thr). The sequence is that of Threonine--tRNA ligase from Proteus mirabilis (strain HI4320).